The following is a 428-amino-acid chain: Adenylosuccinate synthetase (428 aa).

Residues 12 to 18 and 40 to 42 each bind GTP; these read GDEGKGK and GHT. The Proton acceptor role is filled by aspartate 13. The Mg(2+) site is built by aspartate 13 and glycine 40. Residues 13 to 16, 38 to 41, threonine 129, arginine 143, glutamine 224, threonine 239, and arginine 303 each bind IMP; these read DEGK and NAGH. Histidine 41 (proton donor) is an active-site residue. Position 299-305 (299-305) interacts with substrate; it reads VTTGRIR. GTP is bound by residues arginine 305, 331 to 333, and 410 to 412; these read KVD and AYG.

It belongs to the adenylosuccinate synthetase family. As to quaternary structure, homodimer. It depends on Mg(2+) as a cofactor.

The protein resides in the cytoplasm. It catalyses the reaction IMP + L-aspartate + GTP = N(6)-(1,2-dicarboxyethyl)-AMP + GDP + phosphate + 2 H(+). The protein operates within purine metabolism; AMP biosynthesis via de novo pathway; AMP from IMP: step 1/2. In terms of biological role, plays an important role in the de novo pathway of purine nucleotide biosynthesis. Catalyzes the first committed step in the biosynthesis of AMP from IMP. The protein is Adenylosuccinate synthetase of Francisella tularensis subsp. holarctica (strain FTNF002-00 / FTA).